Reading from the N-terminus, the 278-residue chain is Tryptophan synthase alpha chain (278 aa).

Catalysis depends on proton acceptor residues E50 and D61.

This sequence belongs to the TrpA family. As to quaternary structure, tetramer of two alpha and two beta chains.

The enzyme catalyses (1S,2R)-1-C-(indol-3-yl)glycerol 3-phosphate + L-serine = D-glyceraldehyde 3-phosphate + L-tryptophan + H2O. Its pathway is amino-acid biosynthesis; L-tryptophan biosynthesis; L-tryptophan from chorismate: step 5/5. The alpha subunit is responsible for the aldol cleavage of indoleglycerol phosphate to indole and glyceraldehyde 3-phosphate. The sequence is that of Tryptophan synthase alpha chain from Nitrobacter hamburgensis (strain DSM 10229 / NCIMB 13809 / X14).